A 521-amino-acid polypeptide reads, in one-letter code: Jacalin-related lectin 38 (521 aa).

Residues 2 to 48 (MQPDHDLPYDLEGEILSHLPIQILARFRCVCKRWNTLFKERRFFNSD) form the F-box domain. 3 Kelch repeats span residues 145-190 (KHYK…PYSV), 326-373 (YIYI…ITQH), and 486-521 (MSFV…SPLP). One can recognise a Jacalin-type lectin domain in the interval 377-519 (SRFAPLRGIQ…LTAFGVHFSP (143 aa)).

This sequence belongs to the jacalin lectin family.

The sequence is that of Jacalin-related lectin 38 (JAL38) from Arabidopsis thaliana (Mouse-ear cress).